Consider the following 569-residue polypeptide: Probable protein phosphatase 2C BIPP2C1 (569 aa).

Disordered regions lie at residues 166-212 (GSSN…SSKV) and 251-279 (SLDD…GSSI). The segment covering 174 to 183 (SEVGVESECG) has biased composition (low complexity). Residues 329-564 (AAMLPHPSKV…DDVTVVVSVV (236 aa)) enclose the PPM-type phosphatase domain. Residues Asp358, Gly359, Asp488, and Asp555 each contribute to the Mn(2+) site.

The protein belongs to the PP2C family. Mg(2+) is required as a cofactor. It depends on Mn(2+) as a cofactor.

It carries out the reaction O-phospho-L-seryl-[protein] + H2O = L-seryl-[protein] + phosphate. The catalysed reaction is O-phospho-L-threonyl-[protein] + H2O = L-threonyl-[protein] + phosphate. In terms of biological role, may play a role in responses to biotic and abiotic stresses. The chain is Probable protein phosphatase 2C BIPP2C1 (BIPP2C1) from Oryza sativa subsp. indica (Rice).